The chain runs to 479 residues: GDP-fucose protein O-fucosyltransferase 3 (479 aa).

Over 1-8 (MVRIQRRK) the chain is Cytoplasmic. Residues 9–31 (LLASCLCVTATVFLLVTLQVMVE) traverse the membrane as a helical; Signal-anchor for type II membrane protein segment. Residues 32–479 (LGKFERKEFK…QEFWGLVFKD (448 aa)) are Lumenal-facing. N-linked (GlcNAc...) asparagine glycans are attached at residues N110 and N168. The cysteines at positions 389 and 392 are disulfide-linked.

Belongs to the glycosyltransferase 10 family. Expressed in lung, digestive tract, gall bladder, placenta, kidney, uterus and brain. Not detected in spleen, heart, muscle, liver and pancreas.

The protein localises to the endoplasmic reticulum membrane. Its subcellular location is the golgi apparatus membrane. The protein resides in the golgi apparatus. It localises to the lysosome. The enzyme catalyses L-threonyl-[protein] + GDP-beta-L-fucose = 3-O-(alpha-L-fucosyl)-L-threonyl-[protein] + GDP + H(+). The catalysed reaction is L-seryl-[protein] + GDP-beta-L-fucose = 3-O-(alpha-L-fucosyl)-L-seryl-[protein] + GDP + H(+). It participates in protein modification; protein glycosylation. Protein O-fucosyltransferase that specifically catalyzes O-fucosylation of serine or threonine residues in EMI domains of target proteins, such as MMRN1, MMRN2 and EMID1. Attaches fucose through an O-glycosidic linkage. O-fucosylation of EMI domain-containing proteins may be required for facilitating protein folding and secretion. May also show alpha-(1,3)-fucosyltransferase activity toward the innermost N-acetyl glucosamine (GlcNAc) residue in biantennary N-glycan acceptors. However, this was tested with a library of synthetic substrates and this activity is unsure in vivo. May be involved in biosynthesis of Lewis X-carrying biantennary N-glycans that regulate neuron stem cell self-renewal during brain development. This Homo sapiens (Human) protein is GDP-fucose protein O-fucosyltransferase 3.